The sequence spans 550 residues: (+)-germacrene D synthase (550 aa).

Mg(2+)-binding residues include Asp-304, Asp-308, and Glu-455. The DDXXD motif motif lies at 304–308 (DDIYD).

This sequence belongs to the terpene synthase family. Tpsa subfamily. Requires Mg(2+) as cofactor. Mn(2+) serves as cofactor. The cofactor is Co(2+). It depends on Ni(2+) as a cofactor.

The protein localises to the cytoplasm. It carries out the reaction (2E,6E)-farnesyl diphosphate = (+)-germacrene D + diphosphate. It functions in the pathway secondary metabolite biosynthesis; terpenoid biosynthesis. Involved in the biosynthesis of germacrene D. Can use farnesyl diphosphate as substrate, but not geranyl diphosphate. Produces mainly (+)-germacrene D along with germacrene B and a number of minor by-products. This is (+)-germacrene D synthase from Zingiber officinale (Ginger).